We begin with the raw amino-acid sequence, 239 residues long: 1-(5-phosphoribosyl)-5-[(5-phosphoribosylamino)methylideneamino] imidazole-4-carboxamide isomerase (239 aa).

The active-site Proton acceptor is Asp-8. The active-site Proton donor is Asp-129.

It belongs to the HisA/HisF family.

The protein resides in the cytoplasm. It catalyses the reaction 1-(5-phospho-beta-D-ribosyl)-5-[(5-phospho-beta-D-ribosylamino)methylideneamino]imidazole-4-carboxamide = 5-[(5-phospho-1-deoxy-D-ribulos-1-ylimino)methylamino]-1-(5-phospho-beta-D-ribosyl)imidazole-4-carboxamide. It participates in amino-acid biosynthesis; L-histidine biosynthesis; L-histidine from 5-phospho-alpha-D-ribose 1-diphosphate: step 4/9. This chain is 1-(5-phosphoribosyl)-5-[(5-phosphoribosylamino)methylideneamino] imidazole-4-carboxamide isomerase, found in Bacillus cereus (strain ATCC 10987 / NRS 248).